The following is a 303-amino-acid chain: Inosose dehydratase (303 aa).

The protein belongs to the IolE/MocC family. It depends on glutathione as a cofactor. Co(2+) is required as a cofactor. Mn(2+) serves as cofactor.

The enzyme catalyses scyllo-inosose = 3D-3,5/4-trihydroxycyclohexane-1,2-dione + H2O. It participates in polyol metabolism; myo-inositol degradation into acetyl-CoA; acetyl-CoA from myo-inositol: step 2/7. Its function is as follows. Catalyzes the dehydration of inosose (2-keto-myo-inositol, 2KMI or 2,4,6/3,5-pentahydroxycyclohexanone) to 3D-(3,5/4)-trihydroxycyclohexane-1,2-dione (D-2,3-diketo-4-deoxy-epi-inositol). This chain is Inosose dehydratase, found in Halalkalibacterium halodurans (strain ATCC BAA-125 / DSM 18197 / FERM 7344 / JCM 9153 / C-125) (Bacillus halodurans).